Here is a 72-residue protein sequence, read N- to C-terminus: Probable protein transport protein Sec61 subunit gamma (72 aa).

The Cytoplasmic portion of the chain corresponds to 1–40 (MSQKLQKPSFLSEYLRSIRLFSKKCVRPSGKELSMSIKRH). A helical transmembrane segment spans residues 41-61 (AIGIGFLGILGYAIKLIHIPI). The Extracellular segment spans residues 62 to 72 (NNIIVSSPGKE).

It belongs to the SecE/SEC61-gamma family. In terms of assembly, heterotrimeric complex composed of SEC61-alpha, SEC61-beta and SEC61-gamma.

It is found in the endoplasmic reticulum membrane. Its function is as follows. Necessary for protein translocation in the endoplasmic reticulum. This is Probable protein transport protein Sec61 subunit gamma from Encephalitozoon cuniculi (strain GB-M1) (Microsporidian parasite).